Consider the following 244-residue polypeptide: tRNA pseudouridine synthase A (244 aa).

Catalysis depends on Asp-55, which acts as the Nucleophile. Tyr-113 lines the substrate pocket.

Belongs to the tRNA pseudouridine synthase TruA family. Homodimer.

It carries out the reaction uridine(38/39/40) in tRNA = pseudouridine(38/39/40) in tRNA. Formation of pseudouridine at positions 38, 39 and 40 in the anticodon stem and loop of transfer RNAs. This Phytoplasma mali (strain AT) protein is tRNA pseudouridine synthase A.